The sequence spans 40 residues: Muscarinic m1-toxin4 (40 aa).

The cysteines at positions 3 and 24 are disulfide-linked.

It belongs to the three-finger toxin family. Short-chain subfamily. Aminergic toxin sub-subfamily. In terms of assembly, monomer. Contains 4 disulfide bonds. Expressed by the venom gland.

Its subcellular location is the secreted. Its function is as follows. Binds irreversibly and specifically to M1 (CHRM1) muscarinic acetylcholine receptors, blocking further binding of antagonists and preventing the action of agonists. The chain is Muscarinic m1-toxin4 from Dendroaspis angusticeps (Eastern green mamba).